The primary structure comprises 347 residues: Phospho-N-acetylmuramoyl-pentapeptide-transferase (347 aa).

The next 10 membrane-spanning stretches (helical) occupy residues 10 to 30, 67 to 87, 91 to 111, 127 to 147, 164 to 184, 195 to 215, 220 to 240, 250 to 270, 275 to 295, and 325 to 345; these read SLVFFLLTVFALAFILGIFLG, AGGILFFIVLLLTIFFWLPLG, TWLFAFLIISWSSLGWYDDIV, FVLQLLISAVITTAVMYIYKG, LGHSVLGQVFYFILAVLAIVG, LDGLAAGTTCMCAFGLLVVAV, IPLATDIPVLLTALLGVSLAF, VFMGDTGSLLIGGVLGSCAVM, LLLILLGGVFVAEAGSVILQI, and VVKRFWTAGFFCMVFGIIAAL.

Belongs to the glycosyltransferase 4 family. MraY subfamily. Mg(2+) is required as a cofactor.

The protein localises to the cell inner membrane. It catalyses the reaction UDP-N-acetyl-alpha-D-muramoyl-L-alanyl-gamma-D-glutamyl-meso-2,6-diaminopimeloyl-D-alanyl-D-alanine + di-trans,octa-cis-undecaprenyl phosphate = di-trans,octa-cis-undecaprenyl diphospho-N-acetyl-alpha-D-muramoyl-L-alanyl-D-glutamyl-meso-2,6-diaminopimeloyl-D-alanyl-D-alanine + UMP. The protein operates within cell wall biogenesis; peptidoglycan biosynthesis. In terms of biological role, catalyzes the initial step of the lipid cycle reactions in the biosynthesis of the cell wall peptidoglycan: transfers peptidoglycan precursor phospho-MurNAc-pentapeptide from UDP-MurNAc-pentapeptide onto the lipid carrier undecaprenyl phosphate, yielding undecaprenyl-pyrophosphoryl-MurNAc-pentapeptide, known as lipid I. This Chlamydia abortus (strain DSM 27085 / S26/3) (Chlamydophila abortus) protein is Phospho-N-acetylmuramoyl-pentapeptide-transferase.